Here is a 1475-residue protein sequence, read N- to C-terminus: Sterol 3-beta-glucosyltransferase (1475 aa).

2 disordered regions span residues 1 to 73 and 94 to 218; these read MPPP…PPMF and HDRF…EDDK. Residues 8 to 17 show a composition bias toward low complexity; the sequence is LPLHGPAGAA. Basic residues predominate over residues 30-40; the sequence is RVGKKLQKKRH. The span at 108 to 118 shows a compositional bias: basic and acidic residues; sequence GPQRDSADRSH. Over residues 156–168 the composition is skewed to basic residues; that stretch reads EKHKRKISGHKLL. The GRAM 1 domain maps to 270-315; the sequence is QDIFEFDQPEAVIEEYPCWLLQSVLLQGYMYITAKHICFYSYLPKK. A PH domain is found at 318-413; sequence EVVKSGYLSK…WVKSLQRVIF (96 aa). Disordered regions lie at residues 492–541, 594–636, and 653–715; these read ARLK…TTNK, SSPR…MEEP, and QILR…PVTP. The span at 505 to 531 shows a compositional bias: low complexity; the sequence is QQQQQQHPMQPPMQASARSSMSGSRRA. Composition is skewed to polar residues over residues 621–634 and 653–674; these read QQGS…SSME and QILR…SASR. Basic and acidic residues predominate over residues 675-686; that stretch reads TEVEKQQRRDPR. In terms of domain architecture, GRAM 2 spans 798–901; that stretch reads RFRAHFALPE…RDDCAVTLLQ (104 aa). UDP-alpha-D-glucose contacts are provided by serine 989, arginine 990, aspartate 992, alanine 1293, histidine 1295, histidine 1308, serine 1311, glycine 1312, threonine 1313, aspartate 1332, and glutamine 1333. The tract at residues 1413-1475 is disordered; it reads IQVEPDEDEE…RVSPSQQSVA (63 aa). The segment covering 1416 to 1425 has biased composition (acidic residues); the sequence is EPDEDEESAE.

This sequence belongs to the glycosyltransferase 28 family.

It localises to the cytoplasm. Its subcellular location is the preautophagosomal structure membrane. It catalyses the reaction a sterol + UDP-alpha-D-glucose = a sterol 3-beta-D-glucoside + UDP + H(+). The enzyme catalyses ergosterol + UDP-alpha-D-glucose = ergosteryl 3-beta-D-glucoside + UDP + H(+). Its function is as follows. Sterol glycosyltransferase responsible for the glycosylation of ergosterol to form ergosterol-glucoside. Mediates autophagic degradation of peroxisomes (pexophagy) and is involved in pathogenesis via peroxisome degradation inside appressoria that are developing into the host invasion stage. This chain is Sterol 3-beta-glucosyltransferase, found in Glomerella lagenarium (Anthracnose fungus).